We begin with the raw amino-acid sequence, 240 residues long: Membrane-spanning 4-domains subfamily A member 15 (240 aa).

4 helical membrane passes run 73–93 (VLGT…SVLL), 100–120 (VGIF…FIIS), 144–164 (ILSV…FGVT), and 173–193 (LAVL…AMHF).

This sequence belongs to the MS4A family.

The protein localises to the membrane. In terms of biological role, may be involved in signal transduction as a component of a multimeric receptor complex. The protein is Membrane-spanning 4-domains subfamily A member 15 (MS4A15) of Homo sapiens (Human).